A 293-amino-acid chain; its full sequence is Aromatic amino acid exporter YddG (293 aa).

Topologically, residues 1-6 (MTRQKA) are cytoplasmic. Positions 6 to 137 (ATLIGLIAIV…LALVGVCWVL (132 aa)) constitute an EamA 1 domain. A helical transmembrane segment spans residues 7–27 (TLIGLIAIVLWSTMVGLIRGV). At 28–33 (SEGLGP) the chain is on the periplasmic side. A helical membrane pass occupies residues 34–54 (VGGAAAIYSLSGLLLIFTVGF). Over 55-62 (PRIRQIPK) the chain is Cytoplasmic. The chain crosses the membrane as a helical span at residues 63–83 (GYLLAGSLLFVSYEICLALSL). At 84 to 92 (GYAATHHQA) the chain is on the periplasmic side. A helical transmembrane segment spans residues 93–113 (IEVGMVNYLWPSLTILFAILF). Over 114–118 (NGQKT) the chain is Cytoplasmic. The chain crosses the membrane as a helical span at residues 119 to 139 (NWLIVPGLLLALVGVCWVLGG). At 140–155 (DNGLHYDEIINNITTS) the chain is on the periplasmic side. Residues 156-176 (PLSYFLAFIGAFIWAAYCTVT) traverse the membrane as a helical segment. An EamA 2 domain is found at 158–285 (SYFLAFIGAF…ALMVCGGSLL (128 aa)). Over 177-182 (NKYARG) the chain is Cytoplasmic. A helical transmembrane segment spans residues 183–203 (FNGITVFVLLTGASLWVYYFL). Residues 204–218 (TPQPEMIFSTPVMIK) are Periplasmic-facing. The chain crosses the membrane as a helical span at residues 219–239 (LISAAFTLGFAYAAWNVGILH). The Cytoplasmic segment spans residues 240–243 (GNVT). A helical transmembrane segment spans residues 244-264 (IMAVGSYFTPVLSSALAAVLL). Residues 265–267 (SAP) lie on the Periplasmic side of the membrane. A helical transmembrane segment spans residues 268 to 288 (LSFSFWQGALMVCGGSLLCWL). Residues 289 to 293 (ATRRG) lie on the Cytoplasmic side of the membrane.

This sequence belongs to the drug/metabolite transporter (DMT) superfamily. Aromatic amino acid/paraquat exporter (ArAA/P-E) (TC 2.A.7.17) family.

Its subcellular location is the cell inner membrane. The catalysed reaction is L-phenylalanine(in) = L-phenylalanine(out). It catalyses the reaction L-tyrosine(in) = L-tyrosine(out). It carries out the reaction L-tryptophan(in) = L-tryptophan(out). The enzyme catalyses L-threonine(in) = L-threonine(out). The catalysed reaction is L-methionine(in) = L-methionine(out). It catalyses the reaction L-lysine(in) = L-lysine(out). It carries out the reaction L-glutamate(out) = L-glutamate(in). The enzyme catalyses L-valine(in) = L-valine(out). The catalysed reaction is L-isoleucine(in) = L-isoleucine(out). Amino acid transporter with broad substrate specificity. Can transport various amino acids, including phenylalanine, tyrosine, tryptophan, L-threonine, L-methionine, L-lysine, L-glutamate, L-valine and L-isoleucine. Overexpression confers resistance to phenylalanine and increases export of phenylalanine, tyrosine and tryptophan. This Escherichia coli (strain K12) protein is Aromatic amino acid exporter YddG (yddG).